We begin with the raw amino-acid sequence, 455 residues long: Single-stranded DNA-binding protein homolog sam-10 (455 aa).

The 33-residue stretch at 19 to 51 (ARDRLTSYIYEYLQQTGASKTAETFKEEVLSTN) folds into the LisH domain. Disordered regions lie at residues 217–249 (PPPGGGAQPFPGASGSGGMMPNGAHPHMSLNSP), 281–302 (SDHQPMSAGPAAAAPGATTAGG), 314–343 (GPGSVPQVATTSVGSVGTPSSIGQQLHQPK), and 357–442 (EALT…NGEI). Composition is skewed to low complexity over residues 288–298 (AGPAAAAPGAT) and 321–336 (VATTSVGSVGTPSSIG). The span at 396–406 (HSVNNNVNPGT) shows a compositional bias: polar residues. Over residues 407 to 421 (PGSNPLSNPMSNPPL) the composition is skewed to low complexity.

In terms of tissue distribution, ubiquitously expressed with higher expression in the head and tail ganglia, the vulva and PLM neurons.

It is found in the cytoplasm. It localises to the nucleus. Involved cell autonomously in PLM neuron pre-synaptic differentiation by negatively regulating prk-2 expression and in neurite branch positioning. The polypeptide is Single-stranded DNA-binding protein homolog sam-10 (Caenorhabditis elegans).